A 371-amino-acid chain; its full sequence is MSEISLIMLAAGNSTRFNTKVKKQFLRLGNDPLWLYATKNLSSFYPFKKIVVTSSNISYMKKFTKNYEFIEGGDTRAESLKKALELIDSEFVMVSDVARVLVSKNLFDRLIENLDKADCITPALKVADTTLFDNEALQREKIKLIQTPQISKTKLLKKALDQNLEFTDDSTAIAAMGGKIWFVEGEENARKLTFKEDLKKLDLPTPSFEIFTGNGFDVHEFGENRPLLLAGVQIHPTMGLKAHSDGDVLAHSLTDAILGAAGLGDIGELYPDTDMKFKNANSMELLKQAYDKVREVGFELINIDICVMAQSPKLKDFKQAMQSNIAHTLDLDEFRINVKATTTEKLGFIGRKEGMAVLSSVNLKYFDWTRL.

The interval 1-210 (MSEISLIMLA…LDLPTPSFEI (210 aa)) is 2-C-methyl-D-erythritol 4-phosphate cytidylyltransferase. The segment at 211-371 (FTGNGFDVHE…NLKYFDWTRL (161 aa)) is 2-C-methyl-D-erythritol 2,4-cyclodiphosphate synthase. 2 residues coordinate a divalent metal cation: aspartate 217 and histidine 219. 4-CDP-2-C-methyl-D-erythritol 2-phosphate is bound by residues 217-219 (DVH) and 243-244 (HS). A divalent metal cation is bound at residue histidine 251. Residues 265-267 (DIG), 270-274 (YPDTD), 341-344 (TTTE), phenylalanine 348, and arginine 351 contribute to the 4-CDP-2-C-methyl-D-erythritol 2-phosphate site.

The protein in the N-terminal section; belongs to the IspD/TarI cytidylyltransferase family. IspD subfamily. In the C-terminal section; belongs to the IspF family. It depends on a divalent metal cation as a cofactor.

The enzyme catalyses 2-C-methyl-D-erythritol 4-phosphate + CTP + H(+) = 4-CDP-2-C-methyl-D-erythritol + diphosphate. It carries out the reaction 4-CDP-2-C-methyl-D-erythritol 2-phosphate = 2-C-methyl-D-erythritol 2,4-cyclic diphosphate + CMP. The protein operates within isoprenoid biosynthesis; isopentenyl diphosphate biosynthesis via DXP pathway; isopentenyl diphosphate from 1-deoxy-D-xylulose 5-phosphate: step 2/6. It participates in isoprenoid biosynthesis; isopentenyl diphosphate biosynthesis via DXP pathway; isopentenyl diphosphate from 1-deoxy-D-xylulose 5-phosphate: step 4/6. In terms of biological role, bifunctional enzyme that catalyzes the formation of 4-diphosphocytidyl-2-C-methyl-D-erythritol from CTP and 2-C-methyl-D-erythritol 4-phosphate (MEP) (IspD), and catalyzes the conversion of 4-diphosphocytidyl-2-C-methyl-D-erythritol 2-phosphate (CDP-ME2P) to 2-C-methyl-D-erythritol 2,4-cyclodiphosphate (ME-CPP) with a corresponding release of cytidine 5-monophosphate (CMP) (IspF). This is Bifunctional enzyme IspD/IspF from Campylobacter jejuni subsp. jejuni serotype O:23/36 (strain 81-176).